The sequence spans 457 residues: MSALRRSGYGPSDGPSYGRYYGPGGGDVPVHPPPPLYPLRPEPPQPPISWRVRGGGPAETTWLGEGGGGDGYYPSGGAWPEPGRAGGSHQEQPPYPSYNSNYWNSTARSRAPYPSTYPVRPELQGQSLNSYTNGAYGPTYPPGPGANTASYSGAYYAPGYTQTSYSTEVPSTYRSSGNSPTPVSRWIYPQQDCQTEAPPLRGQVPGYPPSQNPGMTLPHYPYGDGNRSVPQSGPTVRPQEDAWASPGAYGMGGRYPWPSSAPSAPPGNLYMTESTSPWPSSGSPQSPPSPPVQQPKDSSYPYSQSDQSMNRHNFPCSVHQYESSGTVNNDDSDLLDSQVQYSAEPQLYGNATSDHPNNQDQSSSLPEECVPSDESTPPSIKKIIHVLEKVQYLEQEVEEFVGKKTDKAYWLLEEMLTKELLELDSVETGGQDSVRQARKEAVCKIQAILEKLEKKGL.

The tract at residues 1 to 101 is disordered; that stretch reads MSALRRSGYG…QPPYPSYNSN (101 aa). A Phosphoserine modification is found at S7. Over residues 8–20 the composition is skewed to low complexity; the sequence is GYGPSDGPSYGRY. The span at 30–47 shows a compositional bias: pro residues; sequence VHPPPPLYPLRPEPPQPP. Residues R40, R53, and R108 each carry the omega-N-methylarginine modification. Disordered stretches follow at residues 113–136, 166–333, and 347–377; these read YPST…NGAY, STEV…DDSD, and LYGN…ESTP. Polar residues predominate over residues 166–182; sequence STEVPSTYRSSGNSPTP. R185 is modified (omega-N-methylarginine). Composition is skewed to low complexity over residues 274 to 284 and 294 to 308; these read STSPWPSSGSP and QPKD…SDQS. Composition is skewed to polar residues over residues 320–333 and 347–365; these read QYES…DDSD and LYGN…SSSL. A BAG domain is found at 379 to 456; that stretch reads SIKKIIHVLE…AILEKLEKKG (78 aa).

In terms of assembly, binds to the ATPase domain of HSP/HSC70 chaperones. Binds to the death domain of TNFRSF1A in the absence of TNF and thereby prevents binding of adapter molecules such as TRADD or TRAF2. Binds to the death domain of TNFRSF12. Interacts with PRKN. In terms of tissue distribution, ubiquitous.

It is found in the cytoplasm. Functionally, inhibits the chaperone activity of HSP70/HSC70 by promoting substrate release. Prevents constitutive TNFRSF1A signaling. Negative regulator of PRKN translocation to damaged mitochondria. In Homo sapiens (Human), this protein is BAG family molecular chaperone regulator 4 (BAG4).